A 177-amino-acid polypeptide reads, in one-letter code: tRNA-splicing endonuclease (177 aa).

Active-site residues include Tyr114, His123, and Lys154.

The protein belongs to the tRNA-intron endonuclease family. Archaeal short subfamily. Homotetramer; although the tetramer contains four active sites, only two participate in the cleavage. Therefore, it should be considered as a dimer of dimers.

It catalyses the reaction pretRNA = a 3'-half-tRNA molecule with a 5'-OH end + a 5'-half-tRNA molecule with a 2',3'-cyclic phosphate end + an intron with a 2',3'-cyclic phosphate and a 5'-hydroxyl terminus.. Its function is as follows. Endonuclease that removes tRNA introns. Cleaves pre-tRNA at the 5'- and 3'-splice sites to release the intron. The products are an intron and two tRNA half-molecules bearing 2',3' cyclic phosphate and 5'-OH termini. Recognizes a pseudosymmetric substrate in which 2 bulged loops of 3 bases are separated by a stem of 4 bp. The polypeptide is tRNA-splicing endonuclease (Methanococcus vannielii (strain ATCC 35089 / DSM 1224 / JCM 13029 / OCM 148 / SB)).